Here is a 463-residue protein sequence, read N- to C-terminus: L-seryl-tRNA(Sec) selenium transferase (463 aa).

At lysine 295 the chain carries N6-(pyridoxal phosphate)lysine.

This sequence belongs to the SelA family. In terms of assembly, homodecamer; pentamer of dimers. Binds only one seryl-tRNA(Sec) per dimer. It depends on pyridoxal 5'-phosphate as a cofactor.

It is found in the cytoplasm. It carries out the reaction L-seryl-tRNA(Sec) + selenophosphate + H(+) = L-selenocysteinyl-tRNA(Sec) + phosphate. The protein operates within aminoacyl-tRNA biosynthesis; selenocysteinyl-tRNA(Sec) biosynthesis; selenocysteinyl-tRNA(Sec) from L-seryl-tRNA(Sec) (bacterial route): step 1/1. Its function is as follows. Converts seryl-tRNA(Sec) to selenocysteinyl-tRNA(Sec) required for selenoprotein biosynthesis. In Salmonella schwarzengrund (strain CVM19633), this protein is L-seryl-tRNA(Sec) selenium transferase.